Reading from the N-terminus, the 267-residue chain is 3-methyl-2-oxobutanoate hydroxymethyltransferase (267 aa).

The Mg(2+) site is built by Asp-41 and Asp-80. Residues 41–42 (DS), Asp-80, and Lys-109 contribute to the 3-methyl-2-oxobutanoate site. A Mg(2+)-binding site is contributed by Glu-111. The active-site Proton acceptor is Glu-178.

It belongs to the PanB family. In terms of assembly, homodecamer; pentamer of dimers. Mg(2+) serves as cofactor.

Its subcellular location is the cytoplasm. It catalyses the reaction 3-methyl-2-oxobutanoate + (6R)-5,10-methylene-5,6,7,8-tetrahydrofolate + H2O = 2-dehydropantoate + (6S)-5,6,7,8-tetrahydrofolate. It functions in the pathway cofactor biosynthesis; (R)-pantothenate biosynthesis; (R)-pantoate from 3-methyl-2-oxobutanoate: step 1/2. Functionally, catalyzes the reversible reaction in which hydroxymethyl group from 5,10-methylenetetrahydrofolate is transferred onto alpha-ketoisovalerate to form ketopantoate. The protein is 3-methyl-2-oxobutanoate hydroxymethyltransferase of Kosmotoga olearia (strain ATCC BAA-1733 / DSM 21960 / TBF 19.5.1).